The following is a 587-amino-acid chain: Monocopper oxidase-like protein SKU5 (587 aa).

An N-terminal signal peptide occupies residues 1–20 (MDLFKILLLVFFVNISFCFA). Residues N14 and N58 are each glycosylated (N-linked (GlcNAc...) asparagine). H80 lines the Cu cation pocket. N107, N169, N200, N257, N278, N293, N342, N362, N430, and N444 each carry an N-linked (GlcNAc...) asparagine glycan. Residue H452 participates in Cu cation binding. The N-linked (GlcNAc...) asparagine glycan is linked to N534. A lipid anchor (GPI-anchor amidated serine) is attached at S562. The propeptide at 563–587 (ASKSIGFTSLSMVVMALVMMMMLQH) is removed in mature form.

This sequence belongs to the multicopper oxidase family. The cofactor is Cu cation. As to expression, expressed in roots, hypocotyls, cotyledons, leaves, stems and flowers.

The protein localises to the secreted. It is found in the cell wall. Its subcellular location is the cell membrane. Its function is as follows. May be a monocopper oxidase of unknown specificity. Involved in directional growth processes, possibly by participating in cell wall expansion. The polypeptide is Monocopper oxidase-like protein SKU5 (SKU5) (Arabidopsis thaliana (Mouse-ear cress)).